Consider the following 426-residue polypeptide: LIM/homeobox protein Lhx2 (426 aa).

The segment covering 14 to 24 (VIDEMDRRQER) has biased composition (basic and acidic residues). The disordered stretch occupies residues 14–42 (VIDEMDRRQERGSGISSAIDRGDTETTMP). LIM zinc-binding domains follow at residues 52–104 (CAGC…CKED) and 114–167 (CARC…CRLH). The disordered stretch occupies residues 248–268 (DAEHLDRDQPYPSSQKTKRMR). The segment at residues 264-323 (TKRMRTSFKHHQLRTMKSYFAINHNPDAKDLKQLAQKTGLTKRVLQVWFQNARAKFRRNL) is a DNA-binding region (homeobox). Residues 305–321 (KRVLQVWFQNARAKFRR) carry the Nuclear localization signal motif. Residues 326-354 (QENTGVDKTSDATLQTGTPSGPASELSNA) show a composition bias toward polar residues. The segment at 326–370 (QENTGVDKTSDATLQTGTPSGPASELSNASLSPSSTPTTLTDLTS) is disordered. Over residues 355–370 (SLSPSSTPTTLTDLTS) the composition is skewed to low complexity.

In terms of assembly, interacts (via LIM domains) with CITED2. Interacts with POU4F2. In terms of tissue distribution, found in discrete regions of the developing CNS, primarily in diencephalic and telencephalic structures and a subset of lymphoid tissues. Also found in embryonic spinal cord and fetal liver.

It is found in the nucleus. Acts as a transcriptional activator. Stimulates the promoter of the alpha-glycoprotein gene. Transcriptional regulatory protein involved in the control of cell differentiation in developing lymphoid and neural cell types. The polypeptide is LIM/homeobox protein Lhx2 (Lhx2) (Rattus norvegicus (Rat)).